The primary structure comprises 220 residues: Charged multivesicular body protein 4b (220 aa).

Disordered regions lie at residues 1 to 22 (MSLF…SPQE) and 180 to 220 (EIGD…WAAN). Coiled-coil stretches lie at residues 21–88 (QEAI…STIE) and 123–181 (IDKV…LLEI).

The protein belongs to the SNF7 family. Probable core component of the endosomal sorting required for transport complex III (ESCRT-III). ESCRT-III components are thought to multimerize to form a flat lattice on the perimeter membrane of the endosome.

It localises to the cytoplasm. The protein localises to the cytosol. The protein resides in the late endosome membrane. It is found in the midbody. Its function is as follows. Probable core component of the endosomal sorting required for transport complex III (ESCRT-III) which is involved in multivesicular bodies (MVBs) formation and sorting of endosomal cargo proteins into MVBs. MVBs contain intraluminal vesicles (ILVs) that are generated by invagination and scission from the limiting membrane of the endosome and mostly are delivered to lysosomes enabling degradation of membrane proteins, such as stimulated growth factor receptors, lysosomal enzymes and lipids. The protein is Charged multivesicular body protein 4b (chmp4b) of Danio rerio (Zebrafish).